The following is a 1061-amino-acid chain: NACHT, LRR and PYD domains-containing protein 12 (1061 aa).

Positions 1-95 (MLRTAGRDGL…WERGQREDLV (95 aa)) constitute a Pyrin domain. Residues 129–201 (YRDYVRRKFR…SPIKIETLFE (73 aa)) enclose the FISNA domain. The region spanning 211 to 528 (RTVVMQGAAG…EFFAAMYYIL (318 aa)) is the NACHT domain. 217–224 (GAAGIGKS) serves as a coordination point for ATP. LRR repeat units lie at residues 828–848 (HLVE…RLLC), 857–878 (RLRT…ELAS), 885–906 (SLRE…LLCE), 914–935 (KLQT…GLSV), 942–962 (NLRE…WLLA), 971–992 (RLQK…NLYF), 999–1020 (TLTD…LLCK), and 1028–1049 (KLRV…RLAA).

Belongs to the NLRP family. Interacts (via pyrin domain) with ASC. Interacts (via pyrin domain) with FAF1 (via UBA domain). Interacts with MAP3K14; this interaction promotes proteasomal degradation of MAP3K14. Interacts with NOD2; this interaction promotes degradation of NOD2 through the ubiquitin-proteasome pathway. Interacts with HSPA1A and HSPA8. Interacts with HSP90AA1. Interacts with TRIM25; this interaction inhibits RIGI-mediated signaling pathway. In terms of tissue distribution, detected only in peripheral blood leukocytes, predominantly in eosinophils and granulocytes, and at lower levels in monocytes.

It localises to the cytoplasm. Its function is as follows. Plays an essential role as an potent mitigator of inflammation. Primarily expressed in dendritic cells and macrophages, inhibits both canonical and non-canonical NF-kappa-B and ERK activation pathways. Functions as a negative regulator of NOD2 by targeting it to degradation via the proteasome pathway. In turn, promotes bacterial tolerance. Also inhibits the RIGI-mediated immune signaling against RNA viruses by reducing the E3 ubiquitin ligase TRIM25-mediated 'Lys-63'-linked RIGI activation but enhancing the E3 ubiquitin ligase RNF125-mediated 'Lys-48'-linked RIGI degradation. Also acts as a negative regulator of inflammatory response to mitigate obesity and obesity-associated diseases in adipose tissue. The chain is NACHT, LRR and PYD domains-containing protein 12 (NLRP12) from Homo sapiens (Human).